The sequence spans 117 residues: Large ribosomal subunit protein uL18 (117 aa).

The protein belongs to the universal ribosomal protein uL18 family. In terms of assembly, part of the 50S ribosomal subunit; part of the 5S rRNA/L5/L18/L25 subcomplex. Contacts the 5S and 23S rRNAs.

Its function is as follows. This is one of the proteins that bind and probably mediate the attachment of the 5S RNA into the large ribosomal subunit, where it forms part of the central protuberance. The protein is Large ribosomal subunit protein uL18 of Aliivibrio fischeri (strain MJ11) (Vibrio fischeri).